The chain runs to 275 residues: Taurine transport system permease protein TauC (275 aa).

The next 7 membrane-spanning stretches (helical) occupy residues Leu20–Ala42, Ile87–Leu107, Pro124–Ser144, Ile146–Lys166, Val186–Gly206, Val209–Met229, and Phe236–Leu256. The ABC transmembrane type-1 domain maps to Leu80–Gln264.

It belongs to the binding-protein-dependent transport system permease family. CysTW subfamily.

The protein resides in the cell inner membrane. Its function is as follows. Part of a binding-protein-dependent transport system for taurine. Probably responsible for the translocation of the substrate across the membrane. The polypeptide is Taurine transport system permease protein TauC (tauC) (Escherichia coli (strain K12)).